The following is a 569-amino-acid chain: MARILITSALPYINGIKHLGNLAGSMLPADVYARFKRAQGHETLYICATDEHGTPAELAAAAAGQDVATYCAEQHVLQHEVGRAFGLSWDHFGRSSSPQNHRLTQHFCQALEDHGLIEERVDQMVYSVDDKRFLPDRYVEGTCPHCKFEKARGDQCDNCGNLLDPTDLIDPYSVISGSRNIEVRDTKHLYLLQTKMQDKIRAWVDAHADWPPLARSIAYKHLDEGLIDRGITRDLAWGIPVAQDGVPRPGFEEKVFYVWFDAPIEYIAATQEWAEGSPDRDWKRWWRTDAGADDVRYVQFMGKDNVAFHTVSFPATILGSEEPWKSVDMLKAFNWLNWYGGKFSTSNKRGVFMDAALEILPPDLWRWYLTANSPEGSDTAFTWEQFASAVNRDLADVLGNFVNRILKFNESKFEGVVPAGGEPGPLEEKLFADVSARLADLAEQMDAIEIRKSAQALRALWVVGNEYLQEAAPWTAIKTDRDRAAVIVRTALNLAALYAKISAPFIPFAAEKIGDAFGLDFPASWPSNDAKAELNTLSVGRPITVPEVLFKKIEDEQIAEWTARFGGAE.

The short motif at 11-21 (PYINGIKHLGN) is the 'HIGH' region element. Cys143, Cys146, Cys156, and Cys159 together coordinate Zn(2+). The 'KMSKS' region motif lies at 342-346 (KFSTS). Thr345 contributes to the ATP binding site.

It belongs to the class-I aminoacyl-tRNA synthetase family. MetG type 1 subfamily. Monomer. It depends on Zn(2+) as a cofactor.

Its subcellular location is the cytoplasm. The catalysed reaction is tRNA(Met) + L-methionine + ATP = L-methionyl-tRNA(Met) + AMP + diphosphate. Functionally, is required not only for elongation of protein synthesis but also for the initiation of all mRNA translation through initiator tRNA(fMet) aminoacylation. The chain is Methionine--tRNA ligase from Caulobacter vibrioides (strain ATCC 19089 / CIP 103742 / CB 15) (Caulobacter crescentus).